The primary structure comprises 576 residues: D-lactate dehydrogenase [cytochrome], mitochondrial (576 aa).

An FAD-binding PCMH-type domain is found at 139 to 320 (EANQRPEIVL…TEATIKCHVR (182 aa)).

This sequence belongs to the FAD-binding oxidoreductase/transferase type 4 family. Requires FAD as cofactor. Zn(2+) is required as a cofactor.

It is found in the mitochondrion matrix. The enzyme catalyses (R)-lactate + 2 Fe(III)-[cytochrome c] = 2 Fe(II)-[cytochrome c] + pyruvate + 2 H(+). Catalyzes the stereospecific oxidation of D-lactate to pyruvate. The protein is D-lactate dehydrogenase [cytochrome], mitochondrial (DLD1) of Kluyveromyces lactis (strain ATCC 8585 / CBS 2359 / DSM 70799 / NBRC 1267 / NRRL Y-1140 / WM37) (Yeast).